Here is a 512-residue protein sequence, read N- to C-terminus: MGRILDISGQPFDFDDEMQSRSDELAMVMKRTQEHPSSGVTPNRAAQMLRDAERGDLTAQADLAFDMEEKDTHLFSELSKRRLAIQALEWRIAPARDASAQEKKDADMLNEYLHDAAWFEDALFDAGDAILKGYSMQEIEWGWLGKMRVPVALHHRDPALFCANPDNLNELRLRDASYHGLELQPFGWFMHRAKSRTGYVGTNGLVRTLIWPFIFKNYSVRDFAEFLEIYGLPMRVGKYPTGSTNREKATLMQAVMDIGRRAGGIIPMGMTLDFQSAADGQSDPFMAMIGWAEKAISKAILGGTLTTEAGDKGARSLGEVHDEVRREIRNADVGQLARSINRDLIYPLLALNSDSTIDINRLPGIVFDTSEAGDITALSDAIPKLAAGMRIPVSWIQEKLHIPQPVGDEAVFTIQPVVPDNGSQKEAALSAEDIPQEDDIDRMGVSPEDWQRSVDPLLKPVIFSVLKDGPEAAMNKAASLYPQMDDAELIDMLTRAIFVADIWGRLDAAADH.

Homododecamer. Part of the immature prohead complex. Might interact with viral I protease; this interaction gives rise to an early 25S initiator complex. The scaffolding protein Z and the capsid protein T should then be added to this initiator complex to yield the immature prohead. Host GroEL and GroES are also essential for the correct assembly of viral head and tail. Post-translationally, cleavage by the viral I protease yields a C-terminally cleaved portal protein competent for DNA packaging and procpasid maturation.

It is found in the virion. The protein resides in the host cytoplasm. In terms of biological role, forms the portal vertex of the capsid. This portal plays critical roles in head assembly, genome packaging, neck/tail attachment, and genome ejection. The portal protein multimerizes as a single ring-shaped homododecamer arranged around a central channel. Binds to the terminase subunits to form the packaging machine. Acts as a linker between the capsid and tail. Required for attachment of the neck proteins to the capsid. The sequence is that of Portal protein (H) from Escherichia phage Mu (Bacteriophage Mu).